We begin with the raw amino-acid sequence, 362 residues long: Ferredoxin--NADP reductase 1 (362 aa).

The FAD site is built by Asp-47, Gln-55, Tyr-60, Ala-100, Phe-141, Asp-309, and Ser-350.

It belongs to the ferredoxin--NADP reductase type 2 family. As to quaternary structure, homodimer. The cofactor is FAD.

The catalysed reaction is 2 reduced [2Fe-2S]-[ferredoxin] + NADP(+) + H(+) = 2 oxidized [2Fe-2S]-[ferredoxin] + NADPH. This is Ferredoxin--NADP reductase 1 from Cupriavidus pinatubonensis (strain JMP 134 / LMG 1197) (Cupriavidus necator (strain JMP 134)).